The chain runs to 336 residues: 4-hydroxy-3-methylbut-2-enyl diphosphate reductase (336 aa).

Cysteine 37 contacts [4Fe-4S] cluster. (2E)-4-hydroxy-3-methylbut-2-enyl diphosphate is bound by residues histidine 66 and histidine 99. Dimethylallyl diphosphate is bound by residues histidine 66 and histidine 99. 2 residues coordinate isopentenyl diphosphate: histidine 66 and histidine 99. Residue cysteine 121 coordinates [4Fe-4S] cluster. (2E)-4-hydroxy-3-methylbut-2-enyl diphosphate is bound at residue histidine 149. Histidine 149 is a binding site for dimethylallyl diphosphate. Histidine 149 lines the isopentenyl diphosphate pocket. Glutamate 151 acts as the Proton donor in catalysis. Residue threonine 189 coordinates (2E)-4-hydroxy-3-methylbut-2-enyl diphosphate. [4Fe-4S] cluster is bound at residue cysteine 219. (2E)-4-hydroxy-3-methylbut-2-enyl diphosphate is bound by residues serine 247, serine 248, asparagine 249, and serine 292. Residues serine 247, serine 248, asparagine 249, and serine 292 each contribute to the dimethylallyl diphosphate site. Residues serine 247, serine 248, asparagine 249, and serine 292 each coordinate isopentenyl diphosphate.

Belongs to the IspH family. Requires [4Fe-4S] cluster as cofactor.

It carries out the reaction isopentenyl diphosphate + 2 oxidized [2Fe-2S]-[ferredoxin] + H2O = (2E)-4-hydroxy-3-methylbut-2-enyl diphosphate + 2 reduced [2Fe-2S]-[ferredoxin] + 2 H(+). It catalyses the reaction dimethylallyl diphosphate + 2 oxidized [2Fe-2S]-[ferredoxin] + H2O = (2E)-4-hydroxy-3-methylbut-2-enyl diphosphate + 2 reduced [2Fe-2S]-[ferredoxin] + 2 H(+). Its pathway is isoprenoid biosynthesis; dimethylallyl diphosphate biosynthesis; dimethylallyl diphosphate from (2E)-4-hydroxy-3-methylbutenyl diphosphate: step 1/1. It participates in isoprenoid biosynthesis; isopentenyl diphosphate biosynthesis via DXP pathway; isopentenyl diphosphate from 1-deoxy-D-xylulose 5-phosphate: step 6/6. Catalyzes the conversion of 1-hydroxy-2-methyl-2-(E)-butenyl 4-diphosphate (HMBPP) into a mixture of isopentenyl diphosphate (IPP) and dimethylallyl diphosphate (DMAPP). Acts in the terminal step of the DOXP/MEP pathway for isoprenoid precursor biosynthesis. The sequence is that of 4-hydroxy-3-methylbut-2-enyl diphosphate reductase from Nocardia farcinica (strain IFM 10152).